The chain runs to 87 residues: Small ribosomal subunit protein uS17 (87 aa).

It belongs to the universal ribosomal protein uS17 family. In terms of assembly, part of the 30S ribosomal subunit.

One of the primary rRNA binding proteins, it binds specifically to the 5'-end of 16S ribosomal RNA. This Hydrogenovibrio crunogenus (strain DSM 25203 / XCL-2) (Thiomicrospira crunogena) protein is Small ribosomal subunit protein uS17.